A 405-amino-acid chain; its full sequence is Growth/differentiation factor 11 (405 aa).

The signal sequence occupies residues Met1 to Pro20. A propeptide spanning residues Arg21–Arg296 is cleaved from the precursor. N-linked (GlcNAc...) asparagine glycosylation is present at Asn92. 4 disulfide bridges follow: Cys302–Cys312, Cys311–Cys370, Cys339–Cys402, and Cys343–Cys404.

Belongs to the TGF-beta family. In terms of assembly, homodimer; disulfide-linked. Interacts directly with ACVR2B. Interacts directly with ACVR2A. Interacts with ACVR1B, TGFBR1 and ACVR1C in an ACVR2B-dependent manner. Interacts with FST isoform 2/FS288. Synthesized as large precursor molecule that undergoes proteolytic cleavage by furin-like proteases. This produces an inactive form consisting of the mature C-terminal portion non-covalently bound to its cleaved N-terminal propeptide. Activation of the mature form requires additional cleavage of the propeptide by a tolloid-like metalloproteinase. Highly expressed in the developing limb bud, initially detected in the distal mesenchyme, and later localizing to regions around the developing bones. Is also expressed in adult dental pulp and brain.

It localises to the secreted. Secreted signal that acts globally to regulate anterior/posterior axial patterning during development. May play critical roles in patterning both mesodermal and neural tissues. It is required for proper vertebral patterning and orofacial development. Signals through activin receptors type-2, ACVR2A and ACVR2B, and activin receptors type-1, ACVR1B, ACVR1C and TGFBR1 leading to the phosphorylation of SMAD2 and SMAD3. This Mus musculus (Mouse) protein is Growth/differentiation factor 11 (Gdf11).